A 306-amino-acid chain; its full sequence is Pantothenate kinase (306 aa).

91 to 98 is an ATP binding site; that stretch reads GSVAVGKS.

Belongs to the prokaryotic pantothenate kinase family.

The protein resides in the cytoplasm. It carries out the reaction (R)-pantothenate + ATP = (R)-4'-phosphopantothenate + ADP + H(+). Its pathway is cofactor biosynthesis; coenzyme A biosynthesis; CoA from (R)-pantothenate: step 1/5. The protein is Pantothenate kinase of Streptococcus equi subsp. zooepidemicus (strain H70).